Consider the following 245-residue polypeptide: MIIPALDLIDGKVVRLYQGDYAQKTVYSDSPQSQFTIYNQQGADWLHLVDLDGAKDVTKRQLKVIASLIANTPAKIQIGGGVRTEQDVQDLLDAGAQRVVIGSTAVKEPAMVAGWMKKYGAEHIVLALDINIDAQGNKIVAVSGWQEASGQTIESLLETYLAVGLKHVLCTDISKDGTLSGSNVSLYKEMAAAYPQVAWQASGGIGSLDDIAAVARSGASGMIVGRALLEGKFTVKEAIFCWENA.

Residue aspartate 7 is the Proton acceptor of the active site. The Proton donor role is filled by aspartate 129.

This sequence belongs to the HisA/HisF family.

It localises to the cytoplasm. The catalysed reaction is 1-(5-phospho-beta-D-ribosyl)-5-[(5-phospho-beta-D-ribosylamino)methylideneamino]imidazole-4-carboxamide = 5-[(5-phospho-1-deoxy-D-ribulos-1-ylimino)methylamino]-1-(5-phospho-beta-D-ribosyl)imidazole-4-carboxamide. Its pathway is amino-acid biosynthesis; L-histidine biosynthesis; L-histidine from 5-phospho-alpha-D-ribose 1-diphosphate: step 4/9. The chain is 1-(5-phosphoribosyl)-5-[(5-phosphoribosylamino)methylideneamino] imidazole-4-carboxamide isomerase from Psychromonas ingrahamii (strain DSM 17664 / CCUG 51855 / 37).